Consider the following 350-residue polypeptide: Protein memo-1 homolog (350 aa).

This sequence belongs to the MEMO1 family. In terms of assembly, interacts with rho-1. In terms of tissue distribution, expressed in neuronal and non-neuronal cells in the head and tail, pharyngeal cells, spermatheca, distal tip cells, anchor cell and the intestine.

Functionally, plays a role in the oxidative stress response and the maintenance of longevity by regulating the interaction between GTPase rho-1 and oxidase bli-3. In turn, this serves to modulate bli-3 activity and the control of reactive oxygen species production. May control cell migration by relaying extracellular chemotactic signals to the microtubule cytoskeleton. This Caenorhabditis elegans protein is Protein memo-1 homolog.